We begin with the raw amino-acid sequence, 144 residues long: Large ribosomal subunit protein uL15 (144 aa).

The tract at residues 1 to 54 is disordered; the sequence is MRLNTLSPAEGSKKAGKRLGRGIGSGLGKTGGRGHKGQKSRSGGGVRRGFEGGQ. The segment covering 21–31 has biased composition (gly residues); the sequence is RGIGSGLGKTG.

Belongs to the universal ribosomal protein uL15 family. As to quaternary structure, part of the 50S ribosomal subunit.

In terms of biological role, binds to the 23S rRNA. The protein is Large ribosomal subunit protein uL15 of Klebsiella pneumoniae (strain 342).